The sequence spans 647 residues: Zinc finger CCCH domain-containing protein 19 (647 aa).

C3H1-type zinc fingers lie at residues 16-45 (RRRSTDCIYFLASPLTCKKGSECEYRHSDA) and 47-73 (RMNPRDCWYWFNGNCANPKCSFRHPPL). Residues 78–106 (GAPTTPRTSQQSAPQVSVPAQAPVPNPAS) are disordered. The segment covering 86–106 (SQQSAPQVSVPAQAPVPNPAS) has biased composition (low complexity). A C3H1-type 3 zinc finger spans residues 109 to 136 (AKQGVPCYYFQKGMCVKGDRCAFLHLPQ). 5 disordered regions span residues 155–280 (VPHP…RTNG), 308–327 (LSESRFSQREPMPLTADSSD), 335–452 (QRRL…DAES), 512–580 (LKRK…LSPA), and 586–605 (EAADDASRELEEQQDVETAE). 2 stretches are compositionally biased toward polar residues: residues 160 to 175 (LKNSWTKPNSSAQQNA) and 189 to 203 (NGKTAQKQNLTNRAG). A compositionally biased stretch (basic and acidic residues) spans 267-280 (SLREDRGAYRRTNG). Residues 347–359 (SDRHNVYPEDERH) show a composition bias toward basic and acidic residues. A compositionally biased stretch (polar residues) spans 369–379 (QASNDGVSSSR). Basic and acidic residues predominate over residues 419–433 (LRGKLHDRLKAKPNE). The span at 435-445 (VSGNVQSSLSK) shows a compositional bias: polar residues. Positions 527–536 (GSKREEHSGG) are enriched in basic and acidic residues.

The polypeptide is Zinc finger CCCH domain-containing protein 19 (Oryza sativa subsp. japonica (Rice)).